The sequence spans 402 residues: Homoserine O-acetyltransferase (402 aa).

Positions 38–359 constitute an AB hydrolase-1 domain; that stretch reads NAVLVCHALT…HGHDAFLVEP (322 aa). S146 (nucleophile) is an active-site residue. Position 217 (R217) interacts with substrate. Residues D319 and H352 contribute to the active site. Residue D353 participates in substrate binding.

This sequence belongs to the AB hydrolase superfamily. MetX family. Homodimer.

It localises to the cytoplasm. The catalysed reaction is L-homoserine + acetyl-CoA = O-acetyl-L-homoserine + CoA. It participates in amino-acid biosynthesis; L-methionine biosynthesis via de novo pathway; O-acetyl-L-homoserine from L-homoserine: step 1/1. In terms of biological role, transfers an acetyl group from acetyl-CoA to L-homoserine, forming acetyl-L-homoserine. This is Homoserine O-acetyltransferase from Haloarcula marismortui (strain ATCC 43049 / DSM 3752 / JCM 8966 / VKM B-1809) (Halobacterium marismortui).